Consider the following 667-residue polypeptide: Bifunctional polymyxin resistance protein ArnA (667 aa).

A formyltransferase ArnAFT region spans residues 1 to 304 (MKAIVFAYHD…EMGIVTDVRL (304 aa)). The Proton donor; for formyltransferase activity role is filled by histidine 104. (6R)-10-formyltetrahydrofolate-binding positions include arginine 114 and 136–140 (VKKAD). Residues 314–667 (RRTRVLILGV…TAAPKDELNA (354 aa)) are dehydrogenase ArnADH. Residues aspartate 347 and 368–369 (DI) each bind NAD(+). UDP-alpha-D-glucuronate contacts are provided by residues alanine 393, tyrosine 398, and 432–433 (TS). Catalysis depends on glutamate 434, which acts as the Proton acceptor; for decarboxylase activity. Residues arginine 460, asparagine 492, 526 to 535 (KLVDGGAQKR), and tyrosine 613 contribute to the UDP-alpha-D-glucuronate site. The Proton donor; for decarboxylase activity role is filled by arginine 619.

The protein in the N-terminal section; belongs to the Fmt family. UDP-L-Ara4N formyltransferase subfamily. In the C-terminal section; belongs to the NAD(P)-dependent epimerase/dehydratase family. UDP-glucuronic acid decarboxylase subfamily. As to quaternary structure, homohexamer, formed by a dimer of trimers.

It carries out the reaction UDP-alpha-D-glucuronate + NAD(+) = UDP-beta-L-threo-pentopyranos-4-ulose + CO2 + NADH. It catalyses the reaction UDP-4-amino-4-deoxy-beta-L-arabinose + (6R)-10-formyltetrahydrofolate = UDP-4-deoxy-4-formamido-beta-L-arabinose + (6S)-5,6,7,8-tetrahydrofolate + H(+). It functions in the pathway nucleotide-sugar biosynthesis; UDP-4-deoxy-4-formamido-beta-L-arabinose biosynthesis; UDP-4-deoxy-4-formamido-beta-L-arabinose from UDP-alpha-D-glucuronate: step 1/3. The protein operates within nucleotide-sugar biosynthesis; UDP-4-deoxy-4-formamido-beta-L-arabinose biosynthesis; UDP-4-deoxy-4-formamido-beta-L-arabinose from UDP-alpha-D-glucuronate: step 3/3. Its pathway is bacterial outer membrane biogenesis; lipopolysaccharide biosynthesis. Bifunctional enzyme that catalyzes the oxidative decarboxylation of UDP-glucuronic acid (UDP-GlcUA) to UDP-4-keto-arabinose (UDP-Ara4O) and the addition of a formyl group to UDP-4-amino-4-deoxy-L-arabinose (UDP-L-Ara4N) to form UDP-L-4-formamido-arabinose (UDP-L-Ara4FN). The modified arabinose is attached to lipid A and is required for resistance to polymyxin and cationic antimicrobial peptides. The protein is Bifunctional polymyxin resistance protein ArnA of Yersinia pseudotuberculosis serotype O:3 (strain YPIII).